Consider the following 563-residue polypeptide: Septation ring formation regulator EzrA (563 aa).

Residues 1-2 are Extracellular-facing; it reads ME. Residues 3–21 form a helical membrane-spanning segment; that stretch reads LVIGLLVILLALFAAGYFF. Over 22–563 the chain is Cytoplasmic; sequence RKKIYTEIDR…KKIKADQSAS (542 aa). 3 coiled-coil regions span residues 133–159, 243–276, and 309–529; these read EEKS…AYSH, KGYK…ELDV, and SKMP…ERLF.

The protein belongs to the EzrA family.

It is found in the cell membrane. In terms of biological role, negative regulator of FtsZ ring formation; modulates the frequency and position of FtsZ ring formation. Inhibits FtsZ ring formation at polar sites. Interacts either with FtsZ or with one of its binding partners to promote depolymerization. The protein is Septation ring formation regulator EzrA of Bacillus velezensis (strain DSM 23117 / BGSC 10A6 / LMG 26770 / FZB42) (Bacillus amyloliquefaciens subsp. plantarum).